A 457-amino-acid polypeptide reads, in one-letter code: MMIRGHKLKIAEGDIPIAGVKSSRIYSDVSPFRKASDLMIHWNEFVFKVMPEDIAGDGFRLASIPVIPSSEVQAVLRKRESTNYVHWGALSISIDALFRKNAGVSGWCYVYDNRWETFEQAMLQKFRFNLDSGSATLVTSPNFPVSLDDPGLSNSISVAVMFENLNFKLESYPISVRVGNMCRFFDSFLSCVKNKVDSNFLLEAANADPLGAGAFGFEQDDQVSELFNYIQTVPTQAIKSREHEVPRGLFGMMGKKKVKSFEFASGSRNLGRRKPQRGRPLERSASLRVAPGFRSQDERVEHQGLSTDSDFENFLRKGKGKAGTESITSEGSSFDNISAREFQFARQDQKAKDGGSAEPPIKSGRRSESVPGRRRQTPSWKDRGNSGTDTGGHLREHSDTGDLGTNRVPGRAGGGEIHGGSEGGGVIQSEGGSRFDQNIQDYIFGPEYKQHDLPPSV.

Disordered regions lie at residues 265–284, 293–312, and 345–457; these read SGSRNLGRRKPQRGRPLERS, FRSQDERVEHQGLSTDSDFE, and ARQD…PPSV. Residues 411-426 show a composition bias toward gly residues; that stretch reads RAGGGEIHGGSEGGGV. Residues 448–457 are compositionally biased toward basic and acidic residues; it reads YKQHDLPPSV.

Belongs to the tobamoviruses movement protein family.

In terms of biological role, suppressor of viral-induced RNA silencing. The protein is Putative movement protein of Crataegus (hawthorn).